A 289-amino-acid polypeptide reads, in one-letter code: NADPH-dependent 7-cyano-7-deazaguanine reductase (289 aa).

81–83 contributes to the substrate binding site; that stretch reads IES. 83 to 84 contributes to the NADPH binding site; sequence SK. Catalysis depends on Cys196, which acts as the Thioimide intermediate. Asp203 acts as the Proton donor in catalysis. 235–236 is a substrate binding site; that stretch reads HE. 264–265 lines the NADPH pocket; that stretch reads RG.

Belongs to the GTP cyclohydrolase I family. QueF type 2 subfamily. As to quaternary structure, homodimer.

It localises to the cytoplasm. The catalysed reaction is 7-aminomethyl-7-carbaguanine + 2 NADP(+) = 7-cyano-7-deazaguanine + 2 NADPH + 3 H(+). Its pathway is tRNA modification; tRNA-queuosine biosynthesis. Functionally, catalyzes the NADPH-dependent reduction of 7-cyano-7-deazaguanine (preQ0) to 7-aminomethyl-7-deazaguanine (preQ1). The sequence is that of NADPH-dependent 7-cyano-7-deazaguanine reductase from Albidiferax ferrireducens (strain ATCC BAA-621 / DSM 15236 / T118) (Rhodoferax ferrireducens).